Consider the following 247-residue polypeptide: Uridylate kinase (247 aa).

18–21 (KLSG) is a binding site for ATP. Residue Gly-60 participates in UMP binding. Positions 61 and 65 each coordinate ATP. UMP contacts are provided by residues Asp-80 and 141 to 148 (TGNPFFTT). The ATP site is built by Thr-168, Tyr-174, and Asp-177.

Belongs to the UMP kinase family. Homohexamer.

It localises to the cytoplasm. The enzyme catalyses UMP + ATP = UDP + ADP. The protein operates within pyrimidine metabolism; CTP biosynthesis via de novo pathway; UDP from UMP (UMPK route): step 1/1. With respect to regulation, inhibited by UTP. Functionally, catalyzes the reversible phosphorylation of UMP to UDP. This Ectopseudomonas mendocina (strain ymp) (Pseudomonas mendocina) protein is Uridylate kinase.